A 445-amino-acid chain; its full sequence is UDP-N-acetylmuramoylalanine--D-glutamate ligase (445 aa).

Position 110–116 (110–116 (GSNGKTT)) interacts with ATP.

The protein belongs to the MurCDEF family.

The protein localises to the cytoplasm. The enzyme catalyses UDP-N-acetyl-alpha-D-muramoyl-L-alanine + D-glutamate + ATP = UDP-N-acetyl-alpha-D-muramoyl-L-alanyl-D-glutamate + ADP + phosphate + H(+). It functions in the pathway cell wall biogenesis; peptidoglycan biosynthesis. Functionally, cell wall formation. Catalyzes the addition of glutamate to the nucleotide precursor UDP-N-acetylmuramoyl-L-alanine (UMA). This chain is UDP-N-acetylmuramoylalanine--D-glutamate ligase, found in Christiangramia forsetii (strain DSM 17595 / CGMCC 1.15422 / KT0803) (Gramella forsetii).